The sequence spans 308 residues: GTPase Era (308 aa).

An Era-type G domain is found at 7 to 181 (RCGWVALIGP…LRLIVGYMPE (175 aa)). Positions 15–22 (GPPNAGKS) are G1. 15-22 (GPPNAGKS) contributes to the GTP binding site. The segment at 41-45 (QTTRN) is G2. The tract at residues 62-65 (DTPG) is G3. Residues 62 to 66 (DTPGI) and 130 to 133 (NKID) contribute to the GTP site. The G4 stretch occupies residues 130 to 133 (NKID). Positions 160–162 (ASA) are G5. Residues 212–290 (LRQELPYSTA…HLELWVKVRE (79 aa)) enclose the KH type-2 domain.

This sequence belongs to the TRAFAC class TrmE-Era-EngA-EngB-Septin-like GTPase superfamily. Era GTPase family. As to quaternary structure, monomer.

Its subcellular location is the cytoplasm. The protein localises to the cell inner membrane. Its function is as follows. An essential GTPase that binds both GDP and GTP, with rapid nucleotide exchange. Plays a role in 16S rRNA processing and 30S ribosomal subunit biogenesis and possibly also in cell cycle regulation and energy metabolism. This Nitratidesulfovibrio vulgaris (strain DP4) (Desulfovibrio vulgaris) protein is GTPase Era.